The primary structure comprises 894 residues: Probable cytoplasmic aconitate hydratase (894 aa).

Residues glutamine 87 and aspartate 207–histidine 209 each bind substrate. Residues cysteine 438, cysteine 504, and cysteine 507 each contribute to the [4Fe-4S] cluster site. Substrate is bound by residues arginine 537, arginine 542, and serine 781–arginine 782.

The protein belongs to the aconitase/IPM isomerase family. The cofactor is [4Fe-4S] cluster.

It localises to the cytoplasm. The protein resides in the cytosol. It catalyses the reaction citrate = D-threo-isocitrate. Its function is as follows. Catalyzes the isomerization of citrate to isocitrate via cis-aconitate. The chain is Probable cytoplasmic aconitate hydratase (aco1) from Dictyostelium discoideum (Social amoeba).